Reading from the N-terminus, the 852-residue chain is 2-deoxy-glucose resistant protein 2 (852 aa).

A compositionally biased stretch (polar residues) spans 1–18 (MFKSKTSTLSYDETPNSN). Residues 1–60 (MFKSKTSTLSYDETPNSNEGDRNATPVNPKEKSQTKHLNIPGDRSRHSSIADSKRSSSRY) are disordered. 6 WD repeats span residues 171–210 (LFKN…VKRS), 278–316 (EHAL…SLKT), 318–358 (VHPD…VSYA), 426–471 (QHGP…ELFK), 476–515 (GSSR…LSAE), and 651–689 (GFSS…EIRK). Ser716 carries the post-translational modification Phosphoserine. Positions 723–748 (DERSSTEDNEFSTTPPSNTHNSRPSH) are disordered. Over residues 733 to 744 (FSTTPPSNTHNS) the composition is skewed to polar residues.

It belongs to the WD repeat DGR2 family.

This is 2-deoxy-glucose resistant protein 2 (DGR2) from Saccharomyces cerevisiae (strain ATCC 204508 / S288c) (Baker's yeast).